The sequence spans 167 residues: NAD(P)H-quinone oxidoreductase subunit I, chloroplastic (167 aa).

4Fe-4S ferredoxin-type domains follow at residues 55–84 (GRIH…VDWK) and 95–124 (LNYS…MTEE). C64, C67, C70, C74, C104, C107, C110, and C114 together coordinate [4Fe-4S] cluster.

This sequence belongs to the complex I 23 kDa subunit family. NDH is composed of at least 16 different subunits, 5 of which are encoded in the nucleus. [4Fe-4S] cluster serves as cofactor.

The protein localises to the plastid. Its subcellular location is the chloroplast thylakoid membrane. It catalyses the reaction a plastoquinone + NADH + (n+1) H(+)(in) = a plastoquinol + NAD(+) + n H(+)(out). The catalysed reaction is a plastoquinone + NADPH + (n+1) H(+)(in) = a plastoquinol + NADP(+) + n H(+)(out). Functionally, NDH shuttles electrons from NAD(P)H:plastoquinone, via FMN and iron-sulfur (Fe-S) centers, to quinones in the photosynthetic chain and possibly in a chloroplast respiratory chain. The immediate electron acceptor for the enzyme in this species is believed to be plastoquinone. Couples the redox reaction to proton translocation, and thus conserves the redox energy in a proton gradient. This chain is NAD(P)H-quinone oxidoreductase subunit I, chloroplastic, found in Barbarea verna (Land cress).